The sequence spans 283 residues: MAIKYFKPTTNGRRNMSSLDYSKNLTGHEPTKSLMTILKKKAGRNNSGQITTRHKGSGEKRKYRLVDFKRQKDNIEAIVKTIEYDPNRSANISLIVYKDGFKSYILYPKGLKVNDVIVSGEDVDIKIGNTLPLKNIPEGTFIHNIEMQPKGGAIIARSAGSSAQILGKDDNGKYVVLRLKSGETRRILAECRATIGVVGNEEHSLVNVGKAGRNRHKGIRPTVRGSAMNPNDHPHGGGEGKQPIGRKSPMTPWGRKALGPKTRKTNKSSTKLIIRGRKKRINN.

A disordered region spans residues 215–283 (RHKGIRPTVR…IRGRKKRINN (69 aa)). A compositionally biased stretch (basic residues) spans 274–283 (IRGRKKRINN).

It belongs to the universal ribosomal protein uL2 family. In terms of assembly, part of the 50S ribosomal subunit. Forms a bridge to the 30S subunit in the 70S ribosome.

Its function is as follows. One of the primary rRNA binding proteins. Required for association of the 30S and 50S subunits to form the 70S ribosome, for tRNA binding and peptide bond formation. It has been suggested to have peptidyltransferase activity; this is somewhat controversial. Makes several contacts with the 16S rRNA in the 70S ribosome. The chain is Large ribosomal subunit protein uL2 from Mycoplasma mobile (strain ATCC 43663 / 163K / NCTC 11711) (Mesomycoplasma mobile).